We begin with the raw amino-acid sequence, 173 residues long: MDAVVNLTTLPYRRSVGILVFNHEGKVWVGRRLMVCIHEDTKIYHRWQLPQGGIDENEEPLDAARRELYEETGIRSIELIKEAKYWFHYDFPQEIVGSVLGSKYRGQIQKWFAFQFTGELSEIKINPPPDGHKAEFDQWKWVDLETLPSIVISFKKHVYMKIVNEFRGSFKGL.

A Nudix hydrolase domain is found at 11 to 164 (PYRRSVGILV…KKHVYMKIVN (154 aa)). The Nudix box signature appears at 52–73 (GGIDENEEPLDAARRELYEETG).

Belongs to the Nudix hydrolase family. RppH subfamily. A divalent metal cation serves as cofactor.

Its function is as follows. Accelerates the degradation of transcripts by removing pyrophosphate from the 5'-end of triphosphorylated RNA, leading to a more labile monophosphorylated state that can stimulate subsequent ribonuclease cleavage. This chain is RNA pyrophosphohydrolase, found in Bartonella henselae (strain ATCC 49882 / DSM 28221 / CCUG 30454 / Houston 1) (Rochalimaea henselae).